The primary structure comprises 366 residues: tRNA pseudouridine synthase B (366 aa).

Positions 1–55 (MTVTTPDALLAPHDVQHAGADESAAQIRKPRDNNDPRNANRGGGNGKPRRDKRDV) are disordered. Asp-92 acts as the Nucleophile in catalysis.

It belongs to the pseudouridine synthase TruB family. Type 1 subfamily.

It carries out the reaction uridine(55) in tRNA = pseudouridine(55) in tRNA. Its function is as follows. Responsible for synthesis of pseudouridine from uracil-55 in the psi GC loop of transfer RNAs. The sequence is that of tRNA pseudouridine synthase B from Rhodopseudomonas palustris (strain ATCC BAA-98 / CGA009).